Reading from the N-terminus, the 169-residue chain is Oleosin Ara h 10.0101 (169 aa).

2 helical membrane-spanning segments follow: residues 39–59 (VIAV…AGLA) and 73–93 (LFIL…LSVA). The segment covering 146 to 156 (KDVGQKTKEVG) has biased composition (basic and acidic residues). The interval 146 to 169 (KDVGQKTKEVGQEIQTKAQDSKRT) is disordered.

It belongs to the oleosin family. Expressed in seeds (at protein level).

The protein localises to the lipid droplet. It is found in the membrane. Its function is as follows. May have a structural role to stabilize the lipid body during desiccation of the seed by preventing coalescence of the oil. Probably interacts with both lipid and phospholipid moieties of lipid bodies. May also provide recognition signals for specific lipase anchorage in lipolysis during seedling growth. The protein is Oleosin Ara h 10.0101 of Arachis hypogaea (Peanut).